The following is a 424-amino-acid chain: Tyrosine--tRNA ligase (424 aa).

Residue Tyr-37 participates in L-tyrosine binding. The short motif at 42 to 51 (PTADSLHLGH) is the 'HIGH' region element. Lys-144 carries the post-translational modification N6-acetyllysine. Residues Tyr-175 and Gln-179 each coordinate L-tyrosine. Positions 235–239 (KFGKT) match the 'KMSKS' region motif. ATP is bound at residue Lys-238. An S4 RNA-binding domain is found at 357-414 (ADLMQALVDSELQPSRGQARKTIASNAITINGEKQSDPEYFFKEEDRLFGRFTLLRRG).

Belongs to the class-I aminoacyl-tRNA synthetase family. TyrS type 1 subfamily. Homodimer.

It is found in the cytoplasm. The catalysed reaction is tRNA(Tyr) + L-tyrosine + ATP = L-tyrosyl-tRNA(Tyr) + AMP + diphosphate + H(+). Its function is as follows. Catalyzes the attachment of tyrosine to tRNA(Tyr) in a two-step reaction: tyrosine is first activated by ATP to form Tyr-AMP and then transferred to the acceptor end of tRNA(Tyr). This is Tyrosine--tRNA ligase from Shigella dysenteriae serotype 1 (strain Sd197).